Consider the following 267-residue polypeptide: 27 kDa primary mesenchyme-specific spicule protein (267 aa).

Residues 1–16 (MKLLAILLVLPALCFG) form the signal peptide. The interval 20 to 64 (EGPGMGPGMGPGMGPGMGPGMGPGMGPGMGPGMGPGQGQGQGQGQ) is 11 X 4 AA tandem repeats of G-[PQ]-G-[MQ]. 11 tandem repeats follow at residues 21-24 (GPGM), 25-28 (GPGM), 29-32 (GPGM), 33-36 (GPGM), 37-40 (GPGM), 41-44 (GPGM), 45-48 (GPGM), 49-52 (GPGM), 53-56 (GPGQ), 57-60 (GQGQ), and 61-64 (GQGQ). The segment at 44–68 (MGPGMGPGMGPGQGQGQGQGQGQVG) is disordered. A C-type lectin domain is found at 79 to 220 (IGQQCFKMMS…CDEPMYFACS (142 aa)). Intrachain disulfides connect C100–C219 and C197–C211.

Expressed specifically in the micromere/primary mesenchyme cells (PMC) lineage. Produced uniformly and exclusively by PMCs through the early prism stage and this specificity is further restricted during skeletogenesis to a subpopulation of PMCs associated with the growing tips of the spicules.

The protein resides in the secreted. In terms of biological role, may play a role in the regulation or execution of skeletal growth. This Strongylocentrotus purpuratus (Purple sea urchin) protein is 27 kDa primary mesenchyme-specific spicule protein (PM27).